The chain runs to 248 residues: 2,3-bisphosphoglycerate-dependent phosphoglycerate mutase (248 aa).

Residues 8 to 15 (RHGESTWN), 21 to 22 (TG), arginine 60, 87 to 90 (ERHY), lysine 98, 114 to 115 (RR), and 183 to 184 (GN) each bind substrate. Residue histidine 9 is the Tele-phosphohistidine intermediate of the active site. The active-site Proton donor/acceptor is the glutamate 87.

Belongs to the phosphoglycerate mutase family. BPG-dependent PGAM subfamily. Homodimer.

It catalyses the reaction (2R)-2-phosphoglycerate = (2R)-3-phosphoglycerate. It participates in carbohydrate degradation; glycolysis; pyruvate from D-glyceraldehyde 3-phosphate: step 3/5. Functionally, catalyzes the interconversion of 2-phosphoglycerate and 3-phosphoglycerate. This Burkholderia cenocepacia (strain ATCC BAA-245 / DSM 16553 / LMG 16656 / NCTC 13227 / J2315 / CF5610) (Burkholderia cepacia (strain J2315)) protein is 2,3-bisphosphoglycerate-dependent phosphoglycerate mutase.